The sequence spans 1704 residues: Phospholipid-transporting ATPase ABCA3 (1704 aa).

Asparagine 14 carries an N-linked (GlcNAc...) asparagine glycan. A helical transmembrane segment spans residues 22 to 42 (VLVTVLELFLPLLFSGILIWL). N-linked (GlcNAc...) asparagine glycosylation is found at asparagine 53, asparagine 124, asparagine 140, and asparagine 228. A run of 5 helical transmembrane segments spans residues 251-271 (ISDPFLIAIQYQLPLLLMLSF), 307-327 (AWFLMFLLFSLIVVSFMTLLF), 344-364 (SLVLAFLLCFAISSISFSFMV), 373-393 (MAATVGGFLYFFTYTPYFFVA), and 405-425 (LLSCLLSNVAMAMGAQLIGKF). The 234-residue stretch at 530–763 (IKIKHLSKVF…YGAGYHMTLV (234 aa)) folds into the ABC transporter 1 domain. 566–573 (GHNGAGKT) is a binding site for ATP. 2 N-linked (GlcNAc...) asparagine glycosylation sites follow: asparagine 620 and asparagine 945. Helical transmembrane passes span 1100–1120 (IALNLLIAMAFLASTFSILAV), 1144–1164 (SALLWDLISFLVPSLLLLVVF), 1183–1203 (LLLMLYGWAIIPLMYLLSFFF), 1213–1233 (LTIFNILSGIATFIVVTIMRI), 1245–1265 (LDHVFLVLPNHCLGMAVSNFY), and 1310–1330 (MAASGGIYLTLLFLIETNLLW). The N-linked (GlcNAc...) asparagine glycan is linked to asparagine 1350. Positions 1381–1614 (LIINELSKVY…FGSGYSLQAK (234 aa)) constitute an ABC transporter 2 domain. 1416–1423 (GFNGAGKT) contacts ATP.

As to quaternary structure, homooligomer; disulfide-linked. Post-translationally, N-glycosylated. Localization at intracellular vesicles is accompanied by processing of oligosaccharide from high mannose type to complex type. N-linked glycosylation at Asn-124 and Asn-140 is required for stability and efficient anterograde trafficking and prevents from proteasomal degradation. Proteolytically cleaved by CTSL and to a lower extent by CTSB within multivesicular bodies (MVB) and lamellar bodies (LB) leading to a mature form of 150 kDa. Highly expressed in lung, moderately expressed in stomach, intestine, and kidney and weakly expressed in thyroid, brain, liver, spleen, heart, testis, and thymus.

Its subcellular location is the endosome. The protein localises to the multivesicular body membrane. The protein resides in the cytoplasmic vesicle membrane. It localises to the late endosome membrane. It is found in the lysosome membrane. It catalyses the reaction ATP + H2O + xenobioticSide 1 = ADP + phosphate + xenobioticSide 2.. The enzyme catalyses a 1,2-diacyl-sn-glycero-3-phosphocholine(in) + ATP + H2O = a 1,2-diacyl-sn-glycero-3-phosphocholine(out) + ADP + phosphate + H(+). It carries out the reaction ATP + H2O + phospholipidSide 1 = ADP + phosphate + phospholipidSide 2.. The catalysed reaction is 1,2-dihexadecanoyl-sn-glycero-3-phosphocholine(in) + ATP + H2O = 1,2-dihexadecanoyl-sn-glycero-3-phosphocholine(out) + ADP + phosphate + H(+). It catalyses the reaction cholesterol(in) + ATP + H2O = cholesterol(out) + ADP + phosphate + H(+). The enzyme catalyses a 1,2-diacyl-sn-glycero-3-phospho-(1'-sn-glycerol)(in) + ATP + H2O = a 1,2-diacyl-sn-glycero-3-phospho-(1'-sn-glycerol)(out) + ADP + phosphate + H(+). Catalyzes the ATP-dependent transport of phospholipids such as phosphatidylcholine and phosphoglycerol from the cytoplasm into the lumen side of lamellar bodies, in turn participates in the lamellar bodies biogenesis and homeostasis of pulmonary surfactant. Transports preferentially phosphatidylcholine containing short acyl chains. In addition plays a role as an efflux transporter of miltefosine across macrophage membranes and free cholesterol (FC) through intralumenal vesicles by removing FC from the cell as a component of surfactant and protects cells from free cholesterol toxicity. The chain is Phospholipid-transporting ATPase ABCA3 from Rattus norvegicus (Rat).